Here is a 317-residue protein sequence, read N- to C-terminus: Aspartate carbamoyltransferase catalytic subunit (317 aa).

R64 and T65 together coordinate carbamoyl phosphate. K92 provides a ligand contact to L-aspartate. Residues R114, H142, and Q145 each contribute to the carbamoyl phosphate site. 2 residues coordinate L-aspartate: R176 and R230. Carbamoyl phosphate-binding residues include G271 and P272.

This sequence belongs to the aspartate/ornithine carbamoyltransferase superfamily. ATCase family. Heterododecamer (2C3:3R2) of six catalytic PyrB chains organized as two trimers (C3), and six regulatory PyrI chains organized as three dimers (R2).

The enzyme catalyses carbamoyl phosphate + L-aspartate = N-carbamoyl-L-aspartate + phosphate + H(+). It functions in the pathway pyrimidine metabolism; UMP biosynthesis via de novo pathway; (S)-dihydroorotate from bicarbonate: step 2/3. Functionally, catalyzes the condensation of carbamoyl phosphate and aspartate to form carbamoyl aspartate and inorganic phosphate, the committed step in the de novo pyrimidine nucleotide biosynthesis pathway. The protein is Aspartate carbamoyltransferase catalytic subunit of Nitratidesulfovibrio vulgaris (strain DP4) (Desulfovibrio vulgaris).